Here is a 299-residue protein sequence, read N- to C-terminus: Putative zinc-binding protein ORF12 (299 aa).

The protein is Putative zinc-binding protein ORF12 (ORF12) of Ictaluridae (bullhead catfishes).